Here is a 146-residue protein sequence, read N- to C-terminus: Benzoylsuccinyl-CoA thiolase subunit BbsA (146 aa).

The Zn(2+) site is built by Cys-42, Cys-45, Cys-55, and Cys-58.

Belongs to the BbsA family. Heterotetramer composed of two BbsA subunits and two BbsB subunits. Both BbsA and BbsB are essential for enzymatic activity.

It carries out the reaction (S)-2-benzoylsuccinyl-CoA + CoA = benzoyl-CoA + succinyl-CoA. It functions in the pathway xenobiotic degradation; toluene degradation. Its function is as follows. Component of the BbsAB thiolase complex, which catalyzes the thiolytic cleavage of (S)-2-benzoylsuccinyl-CoA to succinyl-CoA and benzoyl-CoA, the final step of anaerobic toluene metabolism. The BbsA subunit critically contributes to an induced-fit process for productive binding of a CoA substrate into the active site of BbsB. In Geobacter metallireducens (strain ATCC 53774 / DSM 7210 / GS-15), this protein is Benzoylsuccinyl-CoA thiolase subunit BbsA.